A 254-amino-acid chain; its full sequence is Major prion protein (254 aa).

Residues 1–22 form the signal peptide; the sequence is MANLGYWLLALFVATWTDVGLC. The interval 23 to 231 is interaction with GRB2, ERI3 and SYN1; the sequence is KKRPKPGGWN…SQAYYDGRRS (209 aa). The interval 25-107 is disordered; the sequence is RPKPGGWNTG…QWNKPSKPKT (83 aa). 5 repeat units span residues 51-59, 60-67, 68-75, 76-83, and 84-91. A 5 X 8 AA tandem repeats of P-H-G-G-G-W-G-Q region spans residues 51–91; that stretch reads PQGGGTWGQPHGGGWGQPHGGGWGQPHGGGWGQPHGGGWGQ. Residues 52–95 show a composition bias toward gly residues; sequence QGGGTWGQPHGGGWGQPHGGGWGQPHGGGWGQPHGGGWGQGGGT. 12 residues coordinate Cu(2+): His-61, Gly-62, Gly-63, His-69, Gly-70, Gly-71, His-77, Gly-78, Gly-79, His-85, Gly-86, and Gly-87. Cys-179 and Cys-214 form a disulfide bridge. Asn-181 and Asn-197 each carry an N-linked (GlcNAc...) asparagine glycan. Ser-231 carries the GPI-anchor amidated serine lipid modification. The propeptide at 232 to 254 is removed in mature form; that stretch reads SAVLFSSPPMILLISFLIFLIVG.

This sequence belongs to the prion family. As to quaternary structure, monomer and homodimer. Has a tendency to aggregate into amyloid fibrils containing a cross-beta spine, formed by a steric zipper of superposed beta-strands. Soluble oligomers may represent an intermediate stage on the path to fibril formation. Copper binding may promote oligomerization. Interacts with GRB2, APP, ERI3/PRNPIP and SYN1. Mislocalized cytosolically exposed PrP interacts with MGRN1; this interaction alters MGRN1 subcellular location and causes lysosomal enlargement. Interacts with KIAA1191.

The protein resides in the cell membrane. The protein localises to the golgi apparatus. Its function is as follows. Its primary physiological function is unclear. Has cytoprotective activity against internal or environmental stresses. May play a role in neuronal development and synaptic plasticity. May be required for neuronal myelin sheath maintenance. May play a role in iron uptake and iron homeostasis. Soluble oligomers are toxic to cultured neuroblastoma cells and induce apoptosis (in vitro). Association with GPC1 (via its heparan sulfate chains) targets PRNP to lipid rafts. Also provides Cu(2+) or Zn(2+) for the ascorbate-mediated GPC1 deaminase degradation of its heparan sulfate side chains. The chain is Major prion protein (PRNP) from Sigmodon hispidus (Hispid cotton rat).